Consider the following 602-residue polypeptide: Proline--tRNA ligase (602 aa).

Belongs to the class-II aminoacyl-tRNA synthetase family. ProS type 1 subfamily. Homodimer.

The protein resides in the cytoplasm. It carries out the reaction tRNA(Pro) + L-proline + ATP = L-prolyl-tRNA(Pro) + AMP + diphosphate. Functionally, catalyzes the attachment of proline to tRNA(Pro) in a two-step reaction: proline is first activated by ATP to form Pro-AMP and then transferred to the acceptor end of tRNA(Pro). As ProRS can inadvertently accommodate and process non-cognate amino acids such as alanine and cysteine, to avoid such errors it has two additional distinct editing activities against alanine. One activity is designated as 'pretransfer' editing and involves the tRNA(Pro)-independent hydrolysis of activated Ala-AMP. The other activity is designated 'posttransfer' editing and involves deacylation of mischarged Ala-tRNA(Pro). The misacylated Cys-tRNA(Pro) is not edited by ProRS. In Thermosynechococcus vestitus (strain NIES-2133 / IAM M-273 / BP-1), this protein is Proline--tRNA ligase.